Here is a 668-residue protein sequence, read N- to C-terminus: tRNA 5-methylaminomethyl-2-thiouridine biosynthesis bifunctional protein MnmC (668 aa).

The segment at 1–245 is tRNA (mnm(5)s(2)U34)-methyltransferase; the sequence is MKHYSIQPAN…KREMLCGVME (245 aa). The FAD-dependent cmnm(5)s(2)U34 oxidoreductase stretch occupies residues 270-668; sequence IGGGIASALL…LLKGKAVKAG (399 aa).

The protein in the N-terminal section; belongs to the methyltransferase superfamily. tRNA (mnm(5)s(2)U34)-methyltransferase family. This sequence in the C-terminal section; belongs to the DAO family. It depends on FAD as a cofactor.

It is found in the cytoplasm. The catalysed reaction is 5-aminomethyl-2-thiouridine(34) in tRNA + S-adenosyl-L-methionine = 5-methylaminomethyl-2-thiouridine(34) in tRNA + S-adenosyl-L-homocysteine + H(+). In terms of biological role, catalyzes the last two steps in the biosynthesis of 5-methylaminomethyl-2-thiouridine (mnm(5)s(2)U) at the wobble position (U34) in tRNA. Catalyzes the FAD-dependent demodification of cmnm(5)s(2)U34 to nm(5)s(2)U34, followed by the transfer of a methyl group from S-adenosyl-L-methionine to nm(5)s(2)U34, to form mnm(5)s(2)U34. This Escherichia coli O6:H1 (strain CFT073 / ATCC 700928 / UPEC) protein is tRNA 5-methylaminomethyl-2-thiouridine biosynthesis bifunctional protein MnmC.